The primary structure comprises 80 residues: UPF0270 protein ASA_3305 (80 aa).

The protein belongs to the UPF0270 family.

In Aeromonas salmonicida (strain A449), this protein is UPF0270 protein ASA_3305.